Consider the following 213-residue polypeptide: 3,4-dihydroxy-2-butanone 4-phosphate synthase (213 aa).

Residues 37-38 (RE), Asp42, 150-154 (RPGHT), and Glu174 contribute to the D-ribulose 5-phosphate site. Glu38 serves as a coordination point for Mg(2+). His153 contacts Mg(2+).

Belongs to the DHBP synthase family. In terms of assembly, homodimer. Mg(2+) is required as a cofactor. Mn(2+) serves as cofactor.

The catalysed reaction is D-ribulose 5-phosphate = (2S)-2-hydroxy-3-oxobutyl phosphate + formate + H(+). The protein operates within cofactor biosynthesis; riboflavin biosynthesis; 2-hydroxy-3-oxobutyl phosphate from D-ribulose 5-phosphate: step 1/1. In terms of biological role, catalyzes the conversion of D-ribulose 5-phosphate to formate and 3,4-dihydroxy-2-butanone 4-phosphate. In Clostridium botulinum (strain Langeland / NCTC 10281 / Type F), this protein is 3,4-dihydroxy-2-butanone 4-phosphate synthase.